The following is a 106-amino-acid chain: Large ribosomal subunit protein eL42 (106 aa).

The protein belongs to the eukaryotic ribosomal protein eL42 family.

The chain is Large ribosomal subunit protein eL42 (RPL44) from Yarrowia lipolytica (strain CLIB 122 / E 150) (Yeast).